The following is a 119-amino-acid chain: Large ribosomal subunit protein bL12 (119 aa).

This sequence belongs to the bacterial ribosomal protein bL12 family. Homodimer. Part of the ribosomal stalk of the 50S ribosomal subunit. Forms a multimeric L10(L12)X complex, where L10 forms an elongated spine to which 2 to 4 L12 dimers bind in a sequential fashion. Binds GTP-bound translation factors.

Its function is as follows. Forms part of the ribosomal stalk which helps the ribosome interact with GTP-bound translation factors. Is thus essential for accurate translation. In Bacillus cytotoxicus (strain DSM 22905 / CIP 110041 / 391-98 / NVH 391-98), this protein is Large ribosomal subunit protein bL12.